The following is a 447-amino-acid chain: MTLENNMDKKLFCISTYGCQMNEEDSEKLSGMLKSQGYERTENKEEASIIIFNTCCVRENAENKVFGNLGQLKQLKKKNPNLVIAICGCMMQQVGMADKVLKTFPYVDIIFGTHNAHKFPEYLHRVLQEGVQVKEILNKEEGIVEGLPIDRKSDVKAFVTIMYGCNNFCTYCIVPYVRGRERSRKSEDIIKEIEELVSQGYKEITLLGQNVNSYGKGLEEDIDFAGLLRKVNEVKGLERVRFMTSHPKDLSDDVIMAIKECDKLCEQVHLPVQSGSSRILKEMNRHYDREYYLDLVKKIKSEIPDVTLTTDIIIGFPGETEEDFLDTLSLCEEVGYDSAFTFIYSRRNHTPADKMENQIPDDIKHDRFNRLVEAINKKVVIKNKEYEGKVVEVLVEGPSKNDETKLTGRTRNGKLVNFAGDEKLVGELVNLKIVRAQPFSLIGEIVE.

The 119-residue stretch at 10-128 (KLFCISTYGC…FPEYLHRVLQ (119 aa)) folds into the MTTase N-terminal domain. 6 residues coordinate [4Fe-4S] cluster: C19, C55, C89, C165, C169, and C172. The Radical SAM core domain maps to 151 to 382 (RKSDVKAFVT…EAINKKVVIK (232 aa)). Residues 384–447 (KEYEGKVVEV…PFSLIGEIVE (64 aa)) enclose the TRAM domain.

The protein belongs to the methylthiotransferase family. MiaB subfamily. As to quaternary structure, monomer. The cofactor is [4Fe-4S] cluster.

The protein resides in the cytoplasm. It carries out the reaction N(6)-dimethylallyladenosine(37) in tRNA + (sulfur carrier)-SH + AH2 + 2 S-adenosyl-L-methionine = 2-methylsulfanyl-N(6)-dimethylallyladenosine(37) in tRNA + (sulfur carrier)-H + 5'-deoxyadenosine + L-methionine + A + S-adenosyl-L-homocysteine + 2 H(+). Functionally, catalyzes the methylthiolation of N6-(dimethylallyl)adenosine (i(6)A), leading to the formation of 2-methylthio-N6-(dimethylallyl)adenosine (ms(2)i(6)A) at position 37 in tRNAs that read codons beginning with uridine. The protein is tRNA-2-methylthio-N(6)-dimethylallyladenosine synthase of Clostridium perfringens (strain ATCC 13124 / DSM 756 / JCM 1290 / NCIMB 6125 / NCTC 8237 / Type A).